The following is a 28-amino-acid chain: M-ectatotoxin-Eb2c (28 aa).

Expressed by the venom gland.

It localises to the secreted. Its function is as follows. Antimicrobial peptide active against Gram-negative bacterium E.coli MH1 (MIC=3.5 uM) and P.aeruginosa PAO1 (MIC=10 uM) and against Gram-positive bacterium A.globiformis VKM Ac-1112 (MIC=1.25 uM). The polypeptide is M-ectatotoxin-Eb2c (Ectatomma brunneum (Ant)).